The sequence spans 261 residues: Homeobox-leucine zipper protein HOX24 (261 aa).

Disordered stretches follow at residues 42-67 (AAAA…RKRR) and 160-188 (KLNE…NSVM). Over residues 46–61 (GRGGGDGDGGGGGGGG) the composition is skewed to gly residues. The homeobox DNA-binding region spans 61–121 (GGERKRRFTE…NKRARWRSKQ (61 aa)). Residues 120–164 (KQIEHDYAALRAQYDALHARVESLRQEKLALADQVDELRGKLNER) form a leucine-zipper region.

Belongs to the HD-ZIP homeobox family. Class I subfamily. Expressed in roots and panicles.

The protein localises to the nucleus. In terms of biological role, probable transcription factor. This is Homeobox-leucine zipper protein HOX24 (HOX24) from Oryza sativa subsp. japonica (Rice).